We begin with the raw amino-acid sequence, 546 residues long: SusD-like protein BACOVA_02651 (546 aa).

The N-terminal stretch at 1-21 is a signal peptide; it reads MRIFMKSKLLVIATTALLFAA. Cys22 is lipidated: N-palmitoyl cysteine. The S-diacylglycerol cysteine moiety is linked to residue Cys22.

Belongs to the SusD family.

The protein resides in the cell outer membrane. It functions in the pathway glucan metabolism; xyloglucan degradation. In terms of biological role, polysaccharide-binding protein present at the surface of the cell. Probably mediates xyloglucan-binding before xyloglucan transport in the periplasm for degradation. This is SusD-like protein BACOVA_02651 from Bacteroides ovatus (strain ATCC 8483 / DSM 1896 / JCM 5824 / BCRC 10623 / CCUG 4943 / NCTC 11153).